The primary structure comprises 107 residues: uncharacterized protein (107 aa).

It localises to the mitochondrion. This is an uncharacterized protein from Arabidopsis thaliana (Mouse-ear cress).